Here is a 341-residue protein sequence, read N- to C-terminus: DNA-directed RNA polymerase subunit alpha (341 aa).

Residues 1–233 (MVREEVAGST…DLFLPFLHAE (233 aa)) form an alpha N-terminal domain (alpha-NTD) region. The alpha C-terminal domain (alpha-CTD) stretch occupies residues 269–341 (IPLNCIFIDQ…IDLLKNKLSF (73 aa)).

The protein belongs to the RNA polymerase alpha chain family. As to quaternary structure, in plastids the minimal PEP RNA polymerase catalytic core is composed of four subunits: alpha, beta, beta', and beta''. When a (nuclear-encoded) sigma factor is associated with the core the holoenzyme is formed, which can initiate transcription.

Its subcellular location is the plastid. The protein localises to the chloroplast. The catalysed reaction is RNA(n) + a ribonucleoside 5'-triphosphate = RNA(n+1) + diphosphate. Its function is as follows. DNA-dependent RNA polymerase catalyzes the transcription of DNA into RNA using the four ribonucleoside triphosphates as substrates. This chain is DNA-directed RNA polymerase subunit alpha, found in Lolium perenne (Perennial ryegrass).